A 178-amino-acid polypeptide reads, in one-letter code: Platelet inhibitor triplatin-2 (178 aa).

The N-terminal stretch at 1 to 18 (MKMIISLTFLGILMLAFA) is a signal peptide. Intrachain disulfides connect C25–C134, C60–C178, and C90–C106.

Belongs to the calycin superfamily. Triabin family. In terms of tissue distribution, expressed in salivary glands.

The protein localises to the secreted. Functionally, inhibits platelet aggregation and vasoconstriction through binding to distinct eicosanoids involved in inflammation (acts as a scavenger), and has a role in inhibiting host innate immunity by impairing platelet-assisted formation of neutrophil extracellular traps (NETs). Inhibits platelet aggregation by collagen, and low doses of thromboxane A2 mimetic (TXA2 mimetic), and arachidonic acid (AA) without affecting aggregation induced by ADP, convulxin (GP6 agonist), and PMA. Binds to TXA2, TXB2, prostaglandine H2 mimetic (PGH2 mimetic), PGJ2, and PGF2alpha. Binding is not observed to leukotrienes, AA, and biogenic amines (PGE1, 5(S)-HETE, 12(S)-HETE, 20-HETE, norepinephrine, epinephrine, serotonin, LTC4 and ADP). Induces relaxation of aorta rat previously contracted with TXA2 mimetic. Moreover, it also impairs platelet-assisted formation of neutrophil extracellular traps (NETs). NETs are web-like structures of DNA and proteins that play an important role in killing of pathogens. In addition, NETs are implicated in thrombus formation. In vivo, this protein exhibits antithrombotic activity in two distinct mice models that are highly dependent on platelets. It is noteworthy that it inhibits thrombosis without promoting excessive bleeding. This Triatoma infestans (Assassin bug) protein is Platelet inhibitor triplatin-2.